The primary structure comprises 392 residues: Succinate--CoA ligase [ADP-forming] subunit beta (392 aa).

The 228-residue stretch at 9 to 236 (RDLFERHGLP…QAAVDPLEQA (228 aa)) folds into the ATP-grasp domain. ATP contacts are provided by residues lysine 45, 52 to 54 (GRG), alanine 94, and glutamate 99. Residues asparagine 191 and aspartate 205 each contribute to the Mg(2+) site. Substrate-binding positions include asparagine 256 and 318-320 (GIT).

It belongs to the succinate/malate CoA ligase beta subunit family. Heterotetramer of two alpha and two beta subunits. Mg(2+) serves as cofactor.

The catalysed reaction is succinate + ATP + CoA = succinyl-CoA + ADP + phosphate. It catalyses the reaction GTP + succinate + CoA = succinyl-CoA + GDP + phosphate. It participates in carbohydrate metabolism; tricarboxylic acid cycle; succinate from succinyl-CoA (ligase route): step 1/1. Functionally, succinyl-CoA synthetase functions in the citric acid cycle (TCA), coupling the hydrolysis of succinyl-CoA to the synthesis of either ATP or GTP and thus represents the only step of substrate-level phosphorylation in the TCA. The beta subunit provides nucleotide specificity of the enzyme and binds the substrate succinate, while the binding sites for coenzyme A and phosphate are found in the alpha subunit. The protein is Succinate--CoA ligase [ADP-forming] subunit beta of Salinispora tropica (strain ATCC BAA-916 / DSM 44818 / JCM 13857 / NBRC 105044 / CNB-440).